The following is a 212-amino-acid chain: Peptide methionine sulfoxide reductase MsrA (212 aa).

Residue C52 is part of the active site.

Belongs to the MsrA Met sulfoxide reductase family.

The enzyme catalyses L-methionyl-[protein] + [thioredoxin]-disulfide + H2O = L-methionyl-(S)-S-oxide-[protein] + [thioredoxin]-dithiol. It catalyses the reaction [thioredoxin]-disulfide + L-methionine + H2O = L-methionine (S)-S-oxide + [thioredoxin]-dithiol. Functionally, has an important function as a repair enzyme for proteins that have been inactivated by oxidation. Catalyzes the reversible oxidation-reduction of methionine sulfoxide in proteins to methionine. The chain is Peptide methionine sulfoxide reductase MsrA from Salmonella paratyphi B (strain ATCC BAA-1250 / SPB7).